Here is a 127-residue protein sequence, read N- to C-terminus: Thioredoxin-3, mitochondrial (127 aa).

A mitochondrion-targeting transit peptide spans 1–21; that stretch reads MLFYKPVMRMAVRPLKSIRFQ. The region spanning 22-127 is the Thioredoxin domain; that stretch reads SSYTSITKLT…TALEKGIKDL (106 aa). Active-site nucleophile residues include Cys55 and Cys58. Cys55 and Cys58 are joined by a disulfide.

Belongs to the thioredoxin family.

The protein localises to the mitochondrion. The sequence is that of Thioredoxin-3, mitochondrial (TRX3) from Saccharomyces cerevisiae (strain ATCC 204508 / S288c) (Baker's yeast).